Reading from the N-terminus, the 164-residue chain is MTDTQVTWLTEESYDRLKAELDQLIANRPVIAAEINDRREEGDLRENGGYHAAREQQGQEEARIRQLQELLNNAKVGEAPKQSGIALPGSVVKVYYDDDEKDTETFLIGTREQGVSDGKLEVYSPNSPLGGALIDAKVGESRSYTVPSGNTVKVTLVSAEPYHG.

Positions 11-76 (EESYDRLKAE…LQELLNNAKV (66 aa)) form a coiled coil.

It belongs to the GreA/GreB family.

Necessary for efficient RNA polymerase transcription elongation past template-encoded arresting sites. The arresting sites in DNA have the property of trapping a certain fraction of elongating RNA polymerases that pass through, resulting in locked ternary complexes. Cleavage of the nascent transcript by cleavage factors such as GreA or GreB allows the resumption of elongation from the new 3'terminus. GreA releases sequences of 2 to 3 nucleotides. The protein is Transcription elongation factor GreA of Mycolicibacterium vanbaalenii (strain DSM 7251 / JCM 13017 / BCRC 16820 / KCTC 9966 / NRRL B-24157 / PYR-1) (Mycobacterium vanbaalenii).